Consider the following 217-residue polypeptide: Frizzled-8 (217 aa).

Over Ala-1–Cys-26 the chain is Extracellular. The helical transmembrane segment at Thr-27–Leu-47 threads the bilayer. At Ser-48–Gln-69 the chain is on the cytoplasmic side. The chain crosses the membrane as a helical span at residues Tyr-70 to Ser-90. At Ser-91–Gly-113 the chain is on the extracellular side. Asn-105 is a glycosylation site (N-linked (GlcNAc...) asparagine). Residues Phe-114–Phe-134 traverse the membrane as a helical segment. Residues Val-135–Arg-160 are Cytoplasmic-facing. The helical transmembrane segment at Ile-161 to Tyr-181 threads the bilayer. At Glu-182–Ala-209 the chain is on the extracellular side. The N-linked (GlcNAc...) asparagine glycan is linked to Asn-194. A helical membrane pass occupies residues Val-210–Met-217.

Belongs to the G-protein coupled receptor Fz/Smo family.

It localises to the membrane. It is found in the cell membrane. Receptor for Wnt proteins. Most of frizzled receptors are coupled to the beta-catenin canonical signaling pathway, which leads to the activation of disheveled proteins, inhibition of GSK-3 kinase, nuclear accumulation of beta-catenin and activation of Wnt target genes. A second signaling pathway involving PKC and calcium fluxes has been seen for some family members, but it is not yet clear if it represents a distinct pathway or if it can be integrated in the canonical pathway, as PKC seems to be required for Wnt-mediated inactivation of GSK-3 kinase. Both pathways seem to involve interactions with G-proteins. May be involved in transduction and intercellular transmission of polarity information during tissue morphogenesis and/or in differentiated tissues. This is Frizzled-8 (FZD8) from Gallus gallus (Chicken).